The sequence spans 488 residues: Glutamyl-tRNA(Gln) amidotransferase subunit A (488 aa).

Residues lysine 77 and serine 152 each act as charge relay system in the active site. The active-site Acyl-ester intermediate is the serine 176.

Belongs to the amidase family. GatA subfamily. As to quaternary structure, heterotrimer of A, B and C subunits.

The enzyme catalyses L-glutamyl-tRNA(Gln) + L-glutamine + ATP + H2O = L-glutaminyl-tRNA(Gln) + L-glutamate + ADP + phosphate + H(+). Allows the formation of correctly charged Gln-tRNA(Gln) through the transamidation of misacylated Glu-tRNA(Gln) in organisms which lack glutaminyl-tRNA synthetase. The reaction takes place in the presence of glutamine and ATP through an activated gamma-phospho-Glu-tRNA(Gln). The polypeptide is Glutamyl-tRNA(Gln) amidotransferase subunit A (Streptococcus pneumoniae (strain JJA)).